The sequence spans 360 residues: Peptide chain release factor 1 (360 aa).

Gln-237 carries the N5-methylglutamine modification.

The protein belongs to the prokaryotic/mitochondrial release factor family. Post-translationally, methylated by PrmC. Methylation increases the termination efficiency of RF1.

The protein resides in the cytoplasm. Functionally, peptide chain release factor 1 directs the termination of translation in response to the peptide chain termination codons UAG and UAA. In Teredinibacter turnerae (strain ATCC 39867 / T7901), this protein is Peptide chain release factor 1.